A 163-amino-acid chain; its full sequence is Protein-export protein SecB (163 aa).

This sequence belongs to the SecB family. Homotetramer, a dimer of dimers. One homotetramer interacts with 1 SecA dimer.

Its subcellular location is the cytoplasm. Its function is as follows. One of the proteins required for the normal export of preproteins out of the cell cytoplasm. It is a molecular chaperone that binds to a subset of precursor proteins, maintaining them in a translocation-competent state. It also specifically binds to its receptor SecA. This is Protein-export protein SecB from Brucella canis (strain ATCC 23365 / NCTC 10854 / RM-666).